The following is a 275-amino-acid chain: tRNA pseudouridine synthase A (275 aa).

The active-site Nucleophile is the Asp-55. Tyr-111 contacts substrate.

It belongs to the tRNA pseudouridine synthase TruA family.

The catalysed reaction is uridine(38/39/40) in tRNA = pseudouridine(38/39/40) in tRNA. Formation of pseudouridine at positions 38, 39 and 40 in the anticodon stem and loop of transfer RNAs. This is tRNA pseudouridine synthase A from Methanococcoides burtonii (strain DSM 6242 / NBRC 107633 / OCM 468 / ACE-M).